The primary structure comprises 493 residues: Cysteine--tRNA ligase (493 aa).

Cys-29 is a Zn(2+) binding site. The short motif at 31-41 (VTVYDLSHIGH) is the 'HIGH' region element. Residues Cys-209, His-234, and Glu-238 each coordinate Zn(2+). The 'KMSKS' region motif lies at 266–270 (KMSKS). Lys-269 is an ATP binding site.

Belongs to the class-I aminoacyl-tRNA synthetase family. Monomer. Requires Zn(2+) as cofactor.

The protein resides in the cytoplasm. It catalyses the reaction tRNA(Cys) + L-cysteine + ATP = L-cysteinyl-tRNA(Cys) + AMP + diphosphate. The protein is Cysteine--tRNA ligase of Syntrophobacter fumaroxidans (strain DSM 10017 / MPOB).